The following is a 298-amino-acid chain: Inosose dehydratase (298 aa).

This sequence belongs to the IolE/MocC family. Requires glutathione as cofactor. It depends on Co(2+) as a cofactor. Mn(2+) is required as a cofactor.

The catalysed reaction is scyllo-inosose = 3D-3,5/4-trihydroxycyclohexane-1,2-dione + H2O. It participates in polyol metabolism; myo-inositol degradation into acetyl-CoA; acetyl-CoA from myo-inositol: step 2/7. Its function is as follows. Catalyzes the dehydration of inosose (2-keto-myo-inositol, 2KMI or 2,4,6/3,5-pentahydroxycyclohexanone) to 3D-(3,5/4)-trihydroxycyclohexane-1,2-dione (D-2,3-diketo-4-deoxy-epi-inositol). The chain is Inosose dehydratase from Geobacillus thermodenitrificans (strain NG80-2).